The following is a 137-amino-acid chain: Thionin-like protein 1 (137 aa).

An N-terminal signal peptide occupies residues 1 to 23 (MEDKRVAMLVVMMLVMGNMLIEA).

This sequence belongs to the plant thionin (TC 1.C.44) family. Is disulfide-linked.

Its subcellular location is the secreted. Its function is as follows. May be involved in plant defense. The polypeptide is Thionin-like protein 1 (Arabidopsis thaliana (Mouse-ear cress)).